Reading from the N-terminus, the 525-residue chain is DEAD-box ATP-dependent RNA helicase CshA (525 aa).

Residues 2–30 (TTFRELGLSDSLLQSVESMGFEEATPIQA) carry the Q motif motif. Residues 33 to 203 (IPHALQGKDI…ERFMTEPQHI (171 aa)) enclose the Helicase ATP-binding domain. ATP is bound at residue 46–53 (AQTGTGKT). The short motif at 151–154 (DEAD) is the DEAD box element. The Helicase C-terminal domain occupies 214–374 (NIQQFYLEVQ…RMDAPTLDEA (161 aa)). The tract at residues 428–525 (TTPIALTSEP…RKHHSRKPQA (98 aa)) is disordered. The segment covering 458–503 (DGNRNRSRDGRGGDGRNRDRNRDGRNRDGNRDRNRDGGNRGRRGEG) has biased composition (basic and acidic residues). The segment covering 515–525 (ERKHHSRKPQA) has biased composition (basic residues).

This sequence belongs to the DEAD box helicase family. CshA subfamily. In terms of assembly, oligomerizes, may be a member of the RNA degradosome.

It localises to the cytoplasm. It catalyses the reaction ATP + H2O = ADP + phosphate + H(+). Functionally, DEAD-box RNA helicase possibly involved in RNA degradation. Unwinds dsRNA in both 5'- and 3'-directions, has RNA-dependent ATPase activity. The sequence is that of DEAD-box ATP-dependent RNA helicase CshA from Bacillus cereus (strain ATCC 10987 / NRS 248).